Consider the following 1201-residue polypeptide: DNA-directed RNA polymerase subunit beta' (1201 aa).

Residues cysteine 60, cysteine 62, cysteine 75, and cysteine 78 each contribute to the Zn(2+) site. Mg(2+) contacts are provided by aspartate 449, aspartate 451, and aspartate 453. Zn(2+) is bound by residues cysteine 818, cysteine 892, cysteine 899, and cysteine 902.

The protein belongs to the RNA polymerase beta' chain family. In terms of assembly, the RNAP catalytic core consists of 2 alpha, 1 beta, 1 beta' and 1 omega subunit. When a sigma factor is associated with the core the holoenzyme is formed, which can initiate transcription. It depends on Mg(2+) as a cofactor. Zn(2+) serves as cofactor.

The catalysed reaction is RNA(n) + a ribonucleoside 5'-triphosphate = RNA(n+1) + diphosphate. Functionally, DNA-dependent RNA polymerase catalyzes the transcription of DNA into RNA using the four ribonucleoside triphosphates as substrates. This Listeria monocytogenes serovar 1/2a (strain ATCC BAA-679 / EGD-e) protein is DNA-directed RNA polymerase subunit beta'.